A 648-amino-acid chain; its full sequence is Serine/threonine-protein kinase DCLK3 (648 aa).

Disordered stretches follow at residues 86–127 (DDRA…HLGV) and 150–345 (QSLE…PRPM). Basic and acidic residues-rich tracts occupy residues 98–127 (GKWEPEPSSKPPREATLEERHARGEKHLGV), 213–234 (ELRRPSKSMDKKEDRGPEDQES), 255–266 (EGLREVKKDTRP), 277–303 (LREHQAGFEKLRRTRGEEKEAEKEKKP), and 312–338 (TLRDDQPAKLEKEPKTRPEENKPERPS). The region spanning 356-613 (YETGRVIGDG…AHQVLQHPWI (258 aa)) is the Protein kinase domain. Residues 362–370 (IGDGNFAVV) and Lys385 contribute to the ATP site. The Proton acceptor role is filled by Asp477. Residues 628–648 (VSPSSEGHFRSQHKRVVEQVS) are disordered.

Belongs to the protein kinase superfamily. CAMK Ser/Thr protein kinase family. CaMK subfamily.

The protein localises to the cytoplasm. It localises to the nucleus. The catalysed reaction is L-seryl-[protein] + ATP = O-phospho-L-seryl-[protein] + ADP + H(+). It catalyses the reaction L-threonyl-[protein] + ATP = O-phospho-L-threonyl-[protein] + ADP + H(+). In Homo sapiens (Human), this protein is Serine/threonine-protein kinase DCLK3 (DCLK3).